Consider the following 348-residue polypeptide: MPHIDNDVKLDFKDVLLRPKRSTLKSRSEVDLTRSFAFRNSKQMYTGIPIIAANMDTVGTFEMAKVLCKFSLFTAVHKHYSLEQWKEFASQNPDCLEHLAASSGTGSSDFEQLEQILNAIPQVKYVCLDVANGYSEHFVEFVKDVRKRFPEHTIMAGNVVTGEMVEELILSGADIIKVGIGPGSVCTTRKKTGVGYPQLSAVMECADAAHGLKGHIISDGGCSCPGDVAKAFGAGADFVMLGGMLAGHSESGGELIERNGRKYKLFYGMSSEMAMKKYAGGVAEYRASEGKTVEVPFKGDVEHTIRDIIGGIRSTCTYVGAAKQKELSRRTTFIRVTQQVKPIFSDES.

Residues 26-27, Lys78, 129-131, and 180-181 each bind NADP(+); these read SR, DVA, and IG. K(+) contacts are provided by Gly181, Gly183, and Cys186. Cys186 (thioimidate intermediate) is an active-site residue. The Proton donor/acceptor role is filled by Thr188. Residue Arg189 coordinates K(+). Residues 219 to 221, 242 to 243, 268 to 270, and 286 to 290 contribute to the GMP site; these read DGG, GG, GMS, and RASEG. NADP(+) contacts are provided by residues Met269 and 285 to 286; that span reads YR. Position 291 is an N6-acetyllysine (Lys291). 314-317 is an NADP(+) binding site; it reads STCT.

It belongs to the IMPDH/GMPR family. GuaC type 1 subfamily. Homotetramer.

It catalyses the reaction IMP + NH4(+) + NADP(+) = GMP + NADPH + 2 H(+). Catalyzes the irreversible NADPH-dependent deamination of GMP to IMP. It functions in the conversion of nucleobase, nucleoside and nucleotide derivatives of G to A nucleotides, and in maintaining the intracellular balance of A and G nucleotides. Plays a role in modulating cellular differentiation. In Bos taurus (Bovine), this protein is GMP reductase 2.